A 755-amino-acid chain; its full sequence is Polyribonucleotide nucleotidyltransferase (755 aa).

Residues aspartate 482 and aspartate 488 each contribute to the Mg(2+) site. Positions 549–608 (PRMVSFYIDKDKISAAIGAKGKNIRSVCERSNAKIEIGDDGKVSVFAMSSAEAEIAKNMM) constitute a KH domain. An S1 motif domain is found at 618 to 686 (GAIVDVKVVK…KGGCPKLSRR (69 aa)). Basic and acidic residues predominate over residues 702-714 (NEEKKDSSNDRDY). The tract at residues 702–755 (NEEKKDSSNDRDYYNSPFNRKSGHRKRPVHSRSSFSNRNNRPKFGNDDSSSSFY) is disordered. Positions 722 to 731 (KSGHRKRPVH) are enriched in basic residues.

It belongs to the polyribonucleotide nucleotidyltransferase family. Mg(2+) is required as a cofactor.

It localises to the cytoplasm. It carries out the reaction RNA(n+1) + phosphate = RNA(n) + a ribonucleoside 5'-diphosphate. In terms of biological role, involved in mRNA degradation. Catalyzes the phosphorolysis of single-stranded polyribonucleotides processively in the 3'- to 5'-direction. The protein is Polyribonucleotide nucleotidyltransferase of Wolbachia sp. subsp. Brugia malayi (strain TRS).